A 438-amino-acid chain; its full sequence is Trigger factor (438 aa).

In terms of domain architecture, PPIase FKBP-type spans 160–245 (DDKVTIDFVG…VKKIQQAELP (86 aa)).

Belongs to the FKBP-type PPIase family. Tig subfamily.

The protein localises to the cytoplasm. It carries out the reaction [protein]-peptidylproline (omega=180) = [protein]-peptidylproline (omega=0). Involved in protein export. Acts as a chaperone by maintaining the newly synthesized protein in an open conformation. Functions as a peptidyl-prolyl cis-trans isomerase. This is Trigger factor from Francisella tularensis subsp. holarctica (strain OSU18).